We begin with the raw amino-acid sequence, 567 residues long: TNF receptor-associated factor 3 (567 aa).

The tract at residues 1-26 is disordered; it reads MESSKKMDAAGTLQPNPPLKLQPDRG. Residue Cys55 forms a Glycyl cysteine thioester (Cys-Gly) (interchain with G-Cter in ubiquitin) linkage. An RING-type zinc finger spans residues 67 to 76; that stretch reads CGHRFCESCM. A Glycyl lysine isopeptide (Lys-Gly) (interchain with G-Cter in ubiquitin) cross-link involves residue Lys106. Cys123 is covalently cross-linked (Glycyl cysteine thioester (Cys-Gly) (interchain with G-Cter in ubiquitin)). 2 consecutive TRAF-type zinc fingers follow at residues 134–189 and 190–248; these read VHLK…IKLQ and KHED…QQIK. Glycyl lysine isopeptide (Lys-Gly) (interchain with G-Cter in ubiquitin) cross-links involve residues Lys155 and Lys167. The stretch at 266 to 337 forms a coiled coil; it reads SNSLEKKVSL…KLKELDKEIR (72 aa). Residue Lys328 forms a Glycyl lysine isopeptide (Lys-Gly) (interchain with G-Cter in ubiquitin) linkage. The MATH domain maps to 414-559; the sequence is NGVLIWKIRD…DDTIFIKVIV (146 aa).

The protein belongs to the TNF receptor-associated factor family. A subfamily. As to quaternary structure, homotrimer. Heterotrimer with TRAF2 and TRAF5. Interacts with LTBR/TNFRSF3, TNFRSF4, TNFRSF5/CD40, TNFRSF8/CD30, TNFRSF13C TNFRSF17/BCMA, TLR4 and EDAR. Interacts with MAP3K5, MAP3K14, TRAIP/TRIP, TDP2/TTRAP, TANK/ITRAF and TRAF3IP1. Interaction with TNFRSF5/CD40 is modulated by TANK/ITRAF, which competes for the same binding site. Interacts with TICAM1. Interacts with TRAFD1. Interacts with OTUB1, OTUB2 and OTUD5. Interacts with RNF216, OPTN and TBK1. Identified in a complex with TRAF2, MAP3K14 and BIRC3. Upon exposure to bacterial lipopolysaccharide (LPS), recruited to a transient complex containing TLR4, TRAF3, TRAF6, IKBKG, MAP3K7, MYD88, TICAM1, BIRC2, BIRC3 and UBE2N. Interacts (via RING-type zinc finger domain) with SRC. Interacts with CARD14. Interacts (via MATH domain) with PTPN22; the interaction promotes TRAF3 polyubiquitination. Interacts with MAVS. Directly interacts with DDX3X; this interaction stimulates TRAF3 'Lys-63' ubiquitination. Interacts with IRF3. Interacts with IKBKE in the course of viral infection. Interacts with TRIM35. Interacts with GAPDH; promoting TRAF3 ubiquitination. Interacts with PPP3CA and PPP3CB. Interacts with RALGDS. Interacts with FBXO11. Post-translationally, undergoes 'Lys-48'-linked polyubiquitination, leading to its proteasomal degradation in response to signaling by TNFSF13B, TLR4 or through CD40. 'Lys-48'-linked polyubiquitinated form is deubiquitinated by OTUD7B, preventing TRAF3 proteolysis and over-activation of non-canonical NF-kappa-B. Undergoes 'Lys-63'-linked ubiquitination during early stages of virus infection, and 'Lys-48'-linked ubiquitination during later stages. Undergoes both 'Lys-48'-linked and 'Lys-63'-linked ubiquitination in response to TLR3 and TLR4 signaling. 'Lys-63'-linked ubiquitination can be mediated by TRIM35. Deubiquitinated by OTUB1, OTUB2 and OTUD5. Undergoes 'Lys-63'-linked deubiquitination by MYSM1 to terminate the pattern-recognition receptors/PRRs pathways. Ubiquitinated at Lys-328 by the SCF(FBXL2) complex, leading to its degradation by the proteasome. In terms of processing, undergoes 'Lys-48'-linked polyubiquitination, leading to its proteasomal degradation in response to signaling by TNFSF13B, TLR4 or through CD40. 'Lys-48'-linked polyubiquitinated form is deubiquitinated by OTUD7B, preventing TRAF3 proteolysis and over-activation of non-canonical NF-kappa-B. Undergoes 'Lys-63'-linked ubiquitination during early stages of virus infection, and 'Lys-48'-linked ubiquitination during later stages. Undergoes both 'Lys-48'-linked and 'Lys-63'-linked ubiquitination in response to TLR3 and TLR4 signaling. 'Lys-63'-linked ubiquitination can be mediated by TRIM35. Deubiquitinated by OTUB1, OTUB2 and OTUD5. Undergoes 'Lys-63'-linked deubiquitination by MYSM1 to terminate the pattern-recognition receptors/PRRs pathways. Also undergoes 'Lys-29'-linked ubiquitination on Cys-55 and Cys-123 by NEDD4L; leading to increased 'Lys-48'- and 'Lys-63'-linked ubiquitination as well as increased binding to TBK1. TLR4 signals emanating from bacteria containing vesicles trigger 'Lys-33'-linked polyubiquitination that promotes the assembly of the exocyst complex thereby connecting innate immune signaling to the cellular trafficking apparatus. Deubiquitinated by USP25 during viral infection, leading to TRAF3 stabilization and type I interferon production. 'Lys-63'-linked ubiquitination by FBXO11 in a NEDD8-dependent manner promotes the amplification of IFN-I signaling. As to expression, detected in bone marrow macrophages and spleen B-cells (at protein level). In adult, highest in brain. Also found in kidney, heart, thymus, spleen, lung, muscle, testis and ovary. Not found in liver.

It localises to the cytoplasm. The protein resides in the endosome. Its subcellular location is the mitochondrion. The enzyme catalyses S-ubiquitinyl-[E2 ubiquitin-conjugating enzyme]-L-cysteine + [acceptor protein]-L-lysine = [E2 ubiquitin-conjugating enzyme]-L-cysteine + N(6)-ubiquitinyl-[acceptor protein]-L-lysine.. Cytoplasmic E3 ubiquitin ligase that regulates various signaling pathways, such as the NF-kappa-B, mitogen-activated protein kinase (MAPK) and interferon regulatory factor (IRF) pathways, and thus controls a lot of biological processes in both immune and non-immune cell types. In TLR and RLR signaling pathways, acts as an E3 ubiquitin ligase promoting the synthesis of 'Lys-63'-linked polyubiquitin chains on several substrates such as ASC that lead to the activation of the type I interferon response or the inflammasome. Following the activation of certain TLRs such as TLR4, acts as a negative NF-kappa-B regulator, possibly to avoid unregulated inflammatory response, and its degradation via 'Lys-48'-linked polyubiquitination is required for MAPK activation and production of inflammatory cytokines. Alternatively, when TLR4 orchestrates bacterial expulsion, TRAF3 undergoes 'Lys-33'-linked polyubiquitination and subsequently binds to RALGDS, mobilizing the exocyst complex to rapidly expel intracellular bacteria back for clearance. Also acts as a constitutive negative regulator of the alternative NF-kappa-B pathway, which controls B-cell survival and lymphoid organ development. Required for normal antibody isotype switching from IgM to IgG. Plays a role T-cell dependent immune responses. Down-regulates proteolytic processing of NFKB2, and thereby inhibits non-canonical activation of NF-kappa-B. Promotes ubiquitination and proteasomal degradation of MAP3K14. The chain is TNF receptor-associated factor 3 from Mus musculus (Mouse).